The chain runs to 546 residues: Arginine--tRNA ligase (546 aa).

The 'HIGH' region signature appears at 122–132 (ANPTGPFTVGH).

Belongs to the class-I aminoacyl-tRNA synthetase family. Monomer.

The protein localises to the cytoplasm. The enzyme catalyses tRNA(Arg) + L-arginine + ATP = L-arginyl-tRNA(Arg) + AMP + diphosphate. The chain is Arginine--tRNA ligase (argS) from Thermotoga maritima (strain ATCC 43589 / DSM 3109 / JCM 10099 / NBRC 100826 / MSB8).